The chain runs to 644 residues: Protein cueball (644 aa).

Residues 1-26 form the signal peptide; the sequence is MIRIRFGMDVLLVVLLATCLLTPAHG. Topologically, residues 27 to 531 are extracellular; the sequence is TPLEWDFAVT…VCLTPRVWTS (505 aa). N-linked (GlcNAc...) asparagine glycosylation is found at asparagine 82 and asparagine 108. LDL-receptor class B repeat units lie at residues 121 to 166, 167 to 211, and 212 to 257; these read MNLF…DVCR, RKLY…DQLS, and DRLF…TNDA. Asparagine 175 and asparagine 190 each carry an N-linked (GlcNAc...) asparagine glycan. An N-linked (GlcNAc...) asparagine glycan is attached at asparagine 313. EGF-like domains lie at 398–430 and 433–471; these read EIRECHNYCVHGTCQMSELAYPKCYCQPGFTGE and ELSVCSGLCLNGGHCRVSKDENEAPSCECPAKFGGARCE. 5 disulfide bridges follow: cysteine 402/cysteine 411, cysteine 406/cysteine 421, cysteine 437/cysteine 447, cysteine 441/cysteine 459, and cysteine 461/cysteine 470. N-linked (GlcNAc...) asparagine glycans are attached at residues asparagine 473 and asparagine 508. Residues 532-552 traverse the membrane as a helical segment; the sequence is SVIIILVVGIVSSLLLVAVIV. At 553–644 the chain is on the cytoplasmic side; it reads HGIRRLYKPK…LIHNMEDDLY (92 aa).

The protein belongs to the cueball family.

The protein localises to the cell membrane. Has a role in spermatogenesis and oogenesis. This Drosophila simulans (Fruit fly) protein is Protein cueball.